Here is an 882-residue protein sequence, read N- to C-terminus: Translation initiation factor IF-2 (882 aa).

The tract at residues 57–211 (YIPANKTKDK…KDKSKPKVAT (155 aa)) is disordered. The span at 104–115 (TTSEKQKDKGEQ) shows a compositional bias: basic and acidic residues. The span at 199-211 (RHKKDKSKPKVAT) shows a compositional bias: basic residues. The 170-residue stretch at 381 to 550 (ERPPVVTIMG…LIQAEVLELK (170 aa)) folds into the tr-type G domain. The segment at 390–397 (GHVDHGKT) is G1. 390 to 397 (GHVDHGKT) contributes to the GTP binding site. Positions 415-419 (GITQH) are G2. Residues 436-439 (DTPG) are G3. GTP contacts are provided by residues 436–440 (DTPGH) and 490–493 (NKMD). The segment at 490–493 (NKMD) is G4. The interval 526-528 (SAK) is G5.

This sequence belongs to the TRAFAC class translation factor GTPase superfamily. Classic translation factor GTPase family. IF-2 subfamily.

The protein resides in the cytoplasm. One of the essential components for the initiation of protein synthesis. Protects formylmethionyl-tRNA from spontaneous hydrolysis and promotes its binding to the 30S ribosomal subunits. Also involved in the hydrolysis of GTP during the formation of the 70S ribosomal complex. This is Translation initiation factor IF-2 from Helicobacter hepaticus (strain ATCC 51449 / 3B1).